The chain runs to 544 residues: Chaperonin GroEL (544 aa).

Residues 29–32, Lys50, 86–90, Gly414, 479–481, and Asp495 contribute to the ATP site; these read TLGP, DGTTT, and DAA.

This sequence belongs to the chaperonin (HSP60) family. As to quaternary structure, forms a cylinder of 14 subunits composed of two heptameric rings stacked back-to-back. Interacts with the co-chaperonin GroES.

It is found in the cytoplasm. The catalysed reaction is ATP + H2O + a folded polypeptide = ADP + phosphate + an unfolded polypeptide.. Its function is as follows. Together with its co-chaperonin GroES, plays an essential role in assisting protein folding. The GroEL-GroES system forms a nano-cage that allows encapsulation of the non-native substrate proteins and provides a physical environment optimized to promote and accelerate protein folding. In Treponema denticola (strain ATCC 35405 / DSM 14222 / CIP 103919 / JCM 8153 / KCTC 15104), this protein is Chaperonin GroEL.